The following is a 370-amino-acid chain: 3-dehydroquinate synthase (370 aa).

Residues 107 to 111 (GVIGD), 131 to 132 (TS), K144, and K153 contribute to the NAD(+) site. Positions 186, 249, and 267 each coordinate Zn(2+).

This sequence belongs to the sugar phosphate cyclases superfamily. Dehydroquinate synthase family. Co(2+) is required as a cofactor. Requires Zn(2+) as cofactor. The cofactor is NAD(+).

Its subcellular location is the cytoplasm. It catalyses the reaction 7-phospho-2-dehydro-3-deoxy-D-arabino-heptonate = 3-dehydroquinate + phosphate. The protein operates within metabolic intermediate biosynthesis; chorismate biosynthesis; chorismate from D-erythrose 4-phosphate and phosphoenolpyruvate: step 2/7. Its function is as follows. Catalyzes the conversion of 3-deoxy-D-arabino-heptulosonate 7-phosphate (DAHP) to dehydroquinate (DHQ). The protein is 3-dehydroquinate synthase of Roseobacter denitrificans (strain ATCC 33942 / OCh 114) (Erythrobacter sp. (strain OCh 114)).